Consider the following 102-residue polypeptide: Small ribosomal subunit protein uS10 (102 aa).

The segment at 34–61 (MAGPIPLPTKTLKVTTRKSTDGEGSSSF) is disordered.

The protein belongs to the universal ribosomal protein uS10 family. In terms of assembly, part of the 30S ribosomal subunit.

Involved in the binding of tRNA to the ribosomes. This Methanococcus aeolicus (strain ATCC BAA-1280 / DSM 17508 / OCM 812 / Nankai-3) protein is Small ribosomal subunit protein uS10.